Reading from the N-terminus, the 123-residue chain is Small ribosomal subunit protein uS12cz/uS12cy (123 aa).

The protein belongs to the universal ribosomal protein uS12 family. Part of the 30S ribosomal subunit.

It is found in the plastid. The protein localises to the chloroplast. In terms of biological role, with S4 and S5 plays an important role in translational accuracy. Located at the interface of the 30S and 50S subunits. The sequence is that of Small ribosomal subunit protein uS12cz/uS12cy (rps12-A) from Nandina domestica (Heavenly bamboo).